Consider the following 445-residue polypeptide: O-fucosyltransferase 23 (445 aa).

Residues 12–34 (IFSKSVACKCLVLVGIALFYRAL) traverse the membrane as a helical; Signal-anchor for type II membrane protein segment. N-linked (GlcNAc...) asparagine glycosylation is found at Asn-97 and Asn-179. 258–260 (HMR) is a binding site for substrate. A glycan (N-linked (GlcNAc...) asparagine) is linked at Asn-294. 374–375 (TF) provides a ligand contact to substrate. Asn-424 is a glycosylation site (N-linked (GlcNAc...) asparagine).

The protein belongs to the glycosyltransferase GT106 family. Expressed in dry pollen grains and germinating pollen grains.

Its subcellular location is the golgi apparatus membrane. It participates in glycan metabolism. Functionally, probable protein O-fucosyltransferase required for correct pollen tube penetration through the stigma-style interface. May be involved in protein O-glycosylation events during pollen-pistil interactions. This Arabidopsis thaliana (Mouse-ear cress) protein is O-fucosyltransferase 23.